The primary structure comprises 175 residues: Large ribosomal subunit protein uL5 (175 aa).

The protein belongs to the universal ribosomal protein uL5 family. Part of the 50S ribosomal subunit; contacts the 5S rRNA and probably tRNA. Forms a bridge to the 30S subunit in the 70S ribosome.

Functionally, this is one of the proteins that bind and probably mediate the attachment of the 5S RNA into the large ribosomal subunit, where it forms part of the central protuberance. In the 70S ribosome it contacts protein S13 of the 30S subunit (bridge B1b), connecting the 2 subunits; this bridge is implicated in subunit movement. May contact the P site tRNA; the 5S rRNA and some of its associated proteins might help stabilize positioning of ribosome-bound tRNAs. This Halobacterium salinarum (strain ATCC 29341 / DSM 671 / R1) protein is Large ribosomal subunit protein uL5.